A 254-amino-acid chain; its full sequence is HTH-type transcriptional regulator GlvR (254 aa).

In terms of domain architecture, HTH rpiR-type spans 1–77 (MQLEELINQH…VFLKWEDQPE (77 aa)). Positions 37-56 (IDALAKACSVSRSSILRLAQ) form a DNA-binding region, H-T-H motif. One can recognise an SIS domain in the interval 106–248 (MCQLIDAADR…FRAYVDYKEA (143 aa)).

Functionally, positive regulator of the glv operon expression, which consists of GlvA, GlvR and GlvC. The chain is HTH-type transcriptional regulator GlvR (glvR) from Bacillus subtilis (strain 168).